A 422-amino-acid chain; its full sequence is 2-oxoglutarate and iron-dependent oxygenase JMJD4 (422 aa).

The 160-residue stretch at 139–298 (QRNFPEHNIY…IMWQFLQDEL (160 aa)) folds into the JmjC domain. Residues His-186, Asp-188, and His-266 each contribute to the Fe cation site.

Belongs to the JMJD6 family. It depends on Fe(2+) as a cofactor.

It localises to the cytoplasm. The enzyme catalyses L-lysyl-[protein] + 2-oxoglutarate + O2 = 4-hydroxy-L-lysyl-[protein] + succinate + CO2. Its function is as follows. Catalyzes the 2-oxoglutarate and iron-dependent C4-lysyl hydroxylation of ETF1 at 'Lys-63' thereby promoting the translational termination efficiency of ETF1. This Danio rerio (Zebrafish) protein is 2-oxoglutarate and iron-dependent oxygenase JMJD4 (jmjd4).